We begin with the raw amino-acid sequence, 58 residues long: MQINKAIELLERAWSDYNNGDTVGAILKLEEAEDLIRKLRVRLCSEIRREGYDAIFIK.

This is an uncharacterized protein from Methanocaldococcus jannaschii (strain ATCC 43067 / DSM 2661 / JAL-1 / JCM 10045 / NBRC 100440) (Methanococcus jannaschii).